Consider the following 20-residue polypeptide: Citrate synthase (20 aa).

The protein belongs to the citrate synthase family. In terms of assembly, homodimer.

The catalysed reaction is oxaloacetate + acetyl-CoA + H2O = citrate + CoA + H(+). It participates in carbohydrate metabolism; tricarboxylic acid cycle; isocitrate from oxaloacetate: step 1/2. The protein is Citrate synthase of Populus euphratica (Euphrates poplar).